We begin with the raw amino-acid sequence, 70 residues long: ATP synthase subunit epsilon, mitochondrial (70 aa).

The protein belongs to the eukaryotic ATPase epsilon family. F-type ATPases have 2 components, CF(1) - the catalytic core - and CF(0) - the membrane proton channel. CF(1) has five subunits: alpha(3), beta(3), gamma(1), delta(1), epsilon(1). CF(0) has three main subunits: a, b and c.

It localises to the mitochondrion. The protein resides in the mitochondrion inner membrane. Mitochondrial membrane ATP synthase (F(1)F(0) ATP synthase or Complex V) produces ATP from ADP in the presence of a proton gradient across the membrane which is generated by electron transport complexes of the respiratory chain. F-type ATPases consist of two structural domains, F(1) - containing the extramembraneous catalytic core, and F(0) - containing the membrane proton channel, linked together by a central stalk and a peripheral stalk. During catalysis, ATP synthesis in the catalytic domain of F(1) is coupled via a rotary mechanism of the central stalk subunits to proton translocation. Part of the complex F(1) domain and of the central stalk which is part of the complex rotary element. Rotation of the central stalk against the surrounding alpha(3)beta(3) subunits leads to hydrolysis of ATP in three separate catalytic sites on the beta subunits. This is ATP synthase subunit epsilon, mitochondrial from Ipomoea batatas (Sweet potato).